The following is a 145-amino-acid chain: Small ribosomal subunit protein uS15 (145 aa).

It belongs to the universal ribosomal protein uS15 family. As to quaternary structure, part of the 30S ribosomal subunit.

This is Small ribosomal subunit protein uS15 from Thermoplasma acidophilum (strain ATCC 25905 / DSM 1728 / JCM 9062 / NBRC 15155 / AMRC-C165).